A 335-amino-acid chain; its full sequence is Phosphatidylcholine-sterol acyltransferase (335 aa).

The signal sequence occupies residues 1–18; that stretch reads MKKWFVCLLGLVALTVQA. The Nucleophile role is filled by Ser34. Active-site residues include Asp306 and His309.

Belongs to the 'GDSL' lipolytic enzyme family.

The enzyme catalyses a sterol + a 1,2-diacyl-sn-glycero-3-phosphocholine = a sterol ester + a 1-acyl-sn-glycero-3-phosphocholine. Its function is as follows. Fatty acid transfer between phosphatidylcholine and cholesterol. In Aeromonas hydrophila, this protein is Phosphatidylcholine-sterol acyltransferase.